Here is a 144-residue protein sequence, read N- to C-terminus: Maximins 10/H3 (144 aa).

Residues 1–18 (MNFKYIVAVSFLIASAYA) form the signal peptide. The propeptide occupies 19–43 (RSVKNDEQSLSQRDVLDEESLREFR). Residue Ser-70 is modified to Serine amide. A propeptide spanning residues 74–123 (TAEDHEVMKRLEAVMRDLDSLDYPEEATERETRGFNQEEIANLFTKKEKR) is cleaved from the precursor. Ile-143 carries the post-translational modification Isoleucine amide.

It belongs to the bombinin family. In terms of tissue distribution, expressed by the skin glands.

Its subcellular location is the secreted. Its function is as follows. Maximin-10 shows antimicrobial activity against bacteria and against the fungus C.albicans. It has little hemolytic activity. In terms of biological role, maximin-H3 shows antibacterial activity against both Gram-positive and Gram-negative bacteria. It also shows antimicrobial activity against the fungus C.albicans. Shows strong hemolytic activity. The polypeptide is Maximins 10/H3 (Bombina maxima (Giant fire-bellied toad)).